A 273-amino-acid chain; its full sequence is Dermonecrotic toxin LhSicTox-alphaIA1iv (273 aa).

Residue H5 is part of the active site. Positions 25 and 27 each coordinate Mg(2+). The active-site Nucleophile is H41. 2 disulfide bridges follow: C45–C51 and C47–C190. Position 85 (D85) interacts with Mg(2+).

Belongs to the arthropod phospholipase D family. Class II subfamily. The cofactor is Mg(2+). As to expression, expressed by the venom gland.

It localises to the secreted. It carries out the reaction an N-(acyl)-sphingosylphosphocholine = an N-(acyl)-sphingosyl-1,3-cyclic phosphate + choline. The enzyme catalyses an N-(acyl)-sphingosylphosphoethanolamine = an N-(acyl)-sphingosyl-1,3-cyclic phosphate + ethanolamine. The catalysed reaction is a 1-acyl-sn-glycero-3-phosphocholine = a 1-acyl-sn-glycero-2,3-cyclic phosphate + choline. It catalyses the reaction a 1-acyl-sn-glycero-3-phosphoethanolamine = a 1-acyl-sn-glycero-2,3-cyclic phosphate + ethanolamine. Its function is as follows. Dermonecrotic toxins cleave the phosphodiester linkage between the phosphate and headgroup of certain phospholipids (sphingolipid and lysolipid substrates), forming an alcohol (often choline) and a cyclic phosphate. This toxin acts on sphingomyelin (SM). It may also act on ceramide phosphoethanolamine (CPE), lysophosphatidylcholine (LPC) and lysophosphatidylethanolamine (LPE), but not on lysophosphatidylserine (LPS), and lysophosphatidylglycerol (LPG). It acts by transphosphatidylation, releasing exclusively cyclic phosphate products as second products. Induces dermonecrosis, hemolysis, increased vascular permeability, edema, inflammatory response, and platelet aggregation. The polypeptide is Dermonecrotic toxin LhSicTox-alphaIA1iv (Loxosceles hirsuta (Recluse spider)).